A 307-amino-acid chain; its full sequence is Acetaldehyde dehydrogenase (307 aa).

The active-site Acyl-thioester intermediate is cysteine 131. NAD(+)-binding positions include 162-170 (SIGPGTRKN) and asparagine 273.

It belongs to the acetaldehyde dehydrogenase family.

It catalyses the reaction acetaldehyde + NAD(+) + CoA = acetyl-CoA + NADH + H(+). In Stutzerimonas stutzeri (Pseudomonas stutzeri), this protein is Acetaldehyde dehydrogenase (nahO).